Consider the following 489-residue polypeptide: Protein P7 (489 aa).

RNA-binding stretches follow at residues Thr-129–Leu-251 and Ala-321–Asn-351.

This sequence belongs to the phytoreovirus protein P7 family.

It localises to the virion. The protein resides in the host cytoplasm. In terms of biological role, probable component of the transcriptional machinery present in the inner capsid. Displays dsRNA binding activity and may play an important role in the sorting of viral RNA and virion assembly. Together with the RNA-directed RNA polymerase P1 and capping enzyme P5, forms an transcriptional complex positioned near the channels situated at each of the five-fold vertices of the core. The sequence is that of Protein P7 from Rice gall dwarf virus (RGDV).